The sequence spans 213 residues: Octanoyltransferase (213 aa).

In terms of domain architecture, BPL/LPL catalytic spans 32 to 207 (NSTLDEIWLV…NILALLNNPD (176 aa)). Substrate-binding positions include 71 to 78 (RGGQVTYH), 138 to 140 (SLG), and 151 to 153 (GLA). Cys169 acts as the Acyl-thioester intermediate in catalysis.

This sequence belongs to the LipB family.

The protein localises to the cytoplasm. It carries out the reaction octanoyl-[ACP] + L-lysyl-[protein] = N(6)-octanoyl-L-lysyl-[protein] + holo-[ACP] + H(+). It participates in protein modification; protein lipoylation via endogenous pathway; protein N(6)-(lipoyl)lysine from octanoyl-[acyl-carrier-protein]: step 1/2. Its function is as follows. Catalyzes the transfer of endogenously produced octanoic acid from octanoyl-acyl-carrier-protein onto the lipoyl domains of lipoate-dependent enzymes. Lipoyl-ACP can also act as a substrate although octanoyl-ACP is likely to be the physiological substrate. This Shigella flexneri serotype 5b (strain 8401) protein is Octanoyltransferase.